A 237-amino-acid chain; its full sequence is MNDADASIQIQQMVRFIRQEAEEKANEISISSEEEFNIEKLQLVEAEKKKIRQEYEKKEKQVDVRKKIDYSMQLNASRIKVLQAQDDIVNAMKEEAAKQLLKVSQHGFFNHHHHQYKHLLKDLIVQCLLRLKEPAVLLRCREEDLDIVESMLDDASEEYCKKAKVHAPEIIVDKDIFLPPAPSDDDPHALSCAGGVVLASRDGKIVCENTLDARLEVAFRNKLPEIRKSLFGKVGAA.

Met1 carries the N-acetylmethionine modification. A coiled-coil region spans residues 9 to 67 (QIQQMVRFIRQEAEEKANEISISSEEEFNIEKLQLVEAEKKKIRQEYEKKEKQVDVRKK).

Belongs to the V-ATPase E subunit family. In terms of assembly, V-ATPase is a heteromultimeric enzyme composed of a peripheral catalytic V1 complex (components A to H) attached to an integral membrane V0 proton pore complex (components: a, c, c'', d and e).

It is found in the vacuole membrane. Functionally, subunit of the peripheral V1 complex of vacuolar ATPase essential for assembly or catalytic function. V-ATPase is responsible for acidifying a variety of intracellular compartments in eukaryotic cells. This is V-type proton ATPase subunit E3 (VHA-E3) from Arabidopsis thaliana (Mouse-ear cress).